We begin with the raw amino-acid sequence, 233 residues long: Protease inhibitor Egf1.0 (233 aa).

Residues 1–28 (MYIDTGIMSNNIFLFAFFALVGLTRIEA) form the signal peptide. In terms of domain architecture, TIL spans 52–104 (CRENEHYNSTRIECEEECNDRNNKLCYRFQQFCWCNEGYIRNSSHICVKLEDC). Positions 201–233 (FGKPKNSSAEKKPLETETQAQKFNGIIDQETLD) are disordered.

This sequence belongs to the polydnaviridae EGF-like motif protein family. In terms of assembly, interacts with host PAP1 and PAP3.

Functionally, counteracts the host humoral immune response by inhibiting the processing and the amidolytic activity of host PAP3. Thereby, melanization of host hemolymph, normally producing several reactive intermediates toxic for viruses, is deregulated and proper immune response cannot occur. The polypeptide is Protease inhibitor Egf1.0 (O12) (Microplitis demolitor (Parasitoid wasp)).